The following is a 400-amino-acid chain: Nicotinate phosphoribosyltransferase (400 aa).

His220 carries the post-translational modification Phosphohistidine; by autocatalysis.

The protein belongs to the NAPRTase family. Post-translationally, transiently phosphorylated on a His residue during the reaction cycle. Phosphorylation strongly increases the affinity for substrates and increases the rate of nicotinate D-ribonucleotide production. Dephosphorylation regenerates the low-affinity form of the enzyme, leading to product release.

The enzyme catalyses nicotinate + 5-phospho-alpha-D-ribose 1-diphosphate + ATP + H2O = nicotinate beta-D-ribonucleotide + ADP + phosphate + diphosphate. Its pathway is cofactor biosynthesis; NAD(+) biosynthesis; nicotinate D-ribonucleotide from nicotinate: step 1/1. In terms of biological role, catalyzes the synthesis of beta-nicotinate D-ribonucleotide from nicotinate and 5-phospho-D-ribose 1-phosphate at the expense of ATP. The polypeptide is Nicotinate phosphoribosyltransferase (Escherichia coli O7:K1 (strain IAI39 / ExPEC)).